We begin with the raw amino-acid sequence, 1025 residues long: Multidrug resistance protein MdtC (1025 aa).

The next 12 helical transmembrane spans lie at 3-23 (FFALFIYRPVATILLSVAITL), 333-353 (EVEQTLIISVALVILVVFLFL), 360-380 (IIPAVAVPVSLIGTFAAMYLC), 387-407 (LSLMALTIATGFVVDDAIVVL), 431-451 (VGFTVLSMSLSLVAVFLPLLL), 463-483 (FAVTLSVAIGISLLVSLTLTP), 528-548 (LVGVVLLGTIALNIWLYISIP), 853-873 (VILIIAAIATVYIVLGILYES), 875-895 (VHPLTILSTLPSAGVGALLAL), 897-917 (LFNAPFSLIALIGIMLLIGIV), 953-973 (PIMMTTLAALFGALPLVLSGG), and 984-1004 (ITIVGGLVMSQLLTLYTTPVV).

It belongs to the resistance-nodulation-cell division (RND) (TC 2.A.6) family. MdtC subfamily. Part of a tripartite efflux system composed of MdtA, MdtB and MdtC. MdtC forms a heteromultimer with MdtB.

Its subcellular location is the cell inner membrane. In terms of biological role, the MdtABC tripartite complex confers resistance against novobiocin and deoxycholate. The chain is Multidrug resistance protein MdtC from Escherichia coli O1:K1 / APEC.